The sequence spans 444 residues: Tol-Pal system protein TolB (444 aa).

A signal peptide spans 1-18 (MKNIIYCILLLFSFNSYA).

Belongs to the TolB family. The Tol-Pal system is composed of five core proteins: the inner membrane proteins TolA, TolQ and TolR, the periplasmic protein TolB and the outer membrane protein Pal. They form a network linking the inner and outer membranes and the peptidoglycan layer.

The protein localises to the periplasm. In terms of biological role, part of the Tol-Pal system, which plays a role in outer membrane invagination during cell division and is important for maintaining outer membrane integrity. This is Tol-Pal system protein TolB from Rickettsia bellii (strain OSU 85-389).